Reading from the N-terminus, the 321-residue chain is Cytochrome c biogenesis protein CcsA (321 aa).

8 consecutive transmembrane segments (helical) span residues 17-37, 43-63, 71-91, 98-118, 143-163, 225-245, 258-275, and 286-306; these read IVSIVITIHLMTLLVDGIVGL, KGMIATFLCITGFLVTRWIYS, LYESLIFLSWSFSIIHMVPKI, LSAITAPSAIFTQGFATSGLL, MVLSYAALLCGSLLSIALLVI, VISLGFIFLTIGILSGAVWAN, ETWAFITWTIFAIYLHTR, and AIVASIGFLIIWICYFGVNLL.

Belongs to the CcmF/CycK/Ccl1/NrfE/CcsA family. In terms of assembly, may interact with Ccs1.

It localises to the plastid. Its subcellular location is the chloroplast thylakoid membrane. In terms of biological role, required during biogenesis of c-type cytochromes (cytochrome c6 and cytochrome f) at the step of heme attachment. In Platanus occidentalis (Sycamore), this protein is Cytochrome c biogenesis protein CcsA.